The sequence spans 496 residues: Cytochrome c-552 (496 aa).

The signal sequence occupies residues 1–23 (MKKYKFLFAISIIAIGLMTVLLA). A heme c-binding site is contributed by histidine 100. Heme is bound by residues cysteine 128, cysteine 131, and lysine 132. Heme c is bound by residues cysteine 166, cysteine 169, histidine 170, cysteine 210, cysteine 213, and histidine 214. Glutamate 216, tyrosine 217, lysine 269, and glutamine 271 together coordinate Ca(2+). A substrate-binding site is contributed by tyrosine 217. Position 272 (histidine 272) interacts with substrate. 9 residues coordinate heme c: histidine 283, cysteine 290, cysteine 293, histidine 294, histidine 308, cysteine 321, cysteine 324, histidine 325, and histidine 400.

The protein belongs to the cytochrome c-552 family. Ca(2+) serves as cofactor. Requires heme c as cofactor.

The protein localises to the periplasm. The catalysed reaction is 6 Fe(III)-[cytochrome c] + NH4(+) + 2 H2O = 6 Fe(II)-[cytochrome c] + nitrite + 8 H(+). Its pathway is nitrogen metabolism; nitrate reduction (assimilation). In terms of biological role, catalyzes the reduction of nitrite to ammonia, consuming six electrons in the process. This Aliarcobacter butzleri (strain RM4018) (Arcobacter butzleri) protein is Cytochrome c-552.